The primary structure comprises 624 residues: Acidic juvenile hormone-suppressible protein 1 (624 aa).

Residues Met1–Ala18 form the signal peptide. Asn75 and Asn478 each carry an N-linked (GlcNAc...) asparagine glycan.

The protein belongs to the hemocyanin family.

Its subcellular location is the secreted. It is found in the extracellular space. The chain is Acidic juvenile hormone-suppressible protein 1 (AJSP-1) from Trichoplusia ni (Cabbage looper).